The sequence spans 579 residues: Putative ABC transporter ATP-binding protein VPA1482 (579 aa).

ABC transporter domains are found at residues 3-244 (IEFS…GIRE) and 299-533 (LEVR…ANLT). Residues 37–44 (GPSGSGKS) and 332–339 (GKNGSGKS) each bind ATP.

This sequence belongs to the ABC transporter superfamily.

It is found in the cell inner membrane. Functionally, probably part of an ABC transporter complex. Responsible for energy coupling to the transport system. The sequence is that of Putative ABC transporter ATP-binding protein VPA1482 from Vibrio parahaemolyticus serotype O3:K6 (strain RIMD 2210633).